A 1403-amino-acid polypeptide reads, in one-letter code: MRSSPYDRANLIADFDSIRISLASPEKIRSWSHGEVTKPETINYRTFKPERDGLFCARIFGPTQDWECLCGKYKRMKHRGVICDKCGVEVTLARVRRERLGHIELASPCSHVWFFKGLPSRIGHLLDITLRELERVLYFEAYVIVDPGDGTGLSSGEVITDERKRQLDQEFPGKFIAMMGAEGIKELLKKIDVESLSEEIREKMKTEQSQQKKLKHAKRLRVVESFRKSGNKPEWMILDVIPVIPPELRPLVPLDGGRFATSDLNDLYRRVINRNNRLKKLIELHAPDVIVRNEKRMLQEAVDALFDNGRRGRVLRGANNRPLKSLSDTLKGKQGRFRQNLLGKRVDYSGRSVIVVGPDLKLHQCGLPKKMALELFKPFIYHRLEQRGHCTTIKQAKELVEQQDPVVWDILEEVIKDHPIMLNRAPTLHRLGIQAFEPVLVEGKAIKIHPLVCTAFNADFDGDQMAVHIPLSPEAQIEASTLMLSANNILSPAHGGPITIPTQDMVLGCYYLTKSRPGAKGEGRTFASTDDVLIALEMGEVETLTPIKLRYTGKVIDLVHAFDTQNILHTEPIEFIKQYMDTTVGRVILNDNLPQDMPYINGLLKKKGLAQLVQYCYLKFGLHVTVHMLDEIKSLGFLYATRAGISIGIDDMVVPSEKAGLVRDAEKEVVLVENQYQDGAITHGERYNKIIEIWSKVTERVSDEMFTAMEEDDRTGRYLNPIYIMADSGARGSKQQIRQLSGMRGLMAKPSGEIIETPITANFREGLNVLQYFISTHGARKGLADTALKTADSGYLTRRLVDVAQDVIISENDCGTTEGIYVEPIIESGEIIEALRDRIVGRVALEDQKDYEGNVIVGVNQEITEDLAAAIQAAGIERVKIRSVLTCESKRGVCVACYGRNLATGRLVERGEAVGVIAAQSIGEPGTQLTMRTFHIGGTATRINEQSKQDAKSDGFARYIGIQTVRSKVGELIAMNRNGIMAVVDDKGREKERYPAVYGARVLVEDGAPVKSNQVLLEWDPYTFSILTEVSGVVHFKDLIDGLTMQERLDEVTGMSQLVVIDSPDEKRQPMIQVRPEGATGRGSEAKKYLMPTHAHLMVRDGEELHAGDVLAKIPRETTKTKDITGGLPRVVELFEARKPRETAIIAEINGTVKYGEVTKGQRKIYVEGEDGEKREYALPRGVHINVQEGEKVKAGEPLMDGPRDPHDILAVLGEKELQKYLVNEIQEVYRLQGVNINDKHLETISRQMMRWVKVEDIGDTEFLPEEIVDKFKFRTENNKVLEAGGRPAQGKAMLLGITKASLSTDSFISAASFQETTRVLTEAAINGKVDYLRGLKENVIMGRLVPAGTGMEYYRQVKIAGEDVVEEPVAEPLDIIPGYDEETRLQYAGGLPEDTGEESLAE.

Positions 68, 70, 83, and 86 each coordinate Zn(2+). Mg(2+) is bound by residues Asp-459, Asp-461, and Asp-463. Zn(2+) is bound by residues Cys-814, Cys-887, Cys-894, and Cys-897.

The protein belongs to the RNA polymerase beta' chain family. In terms of assembly, the RNAP catalytic core consists of 2 alpha, 1 beta, 1 beta' and 1 omega subunit. When a sigma factor is associated with the core the holoenzyme is formed, which can initiate transcription. It depends on Mg(2+) as a cofactor. The cofactor is Zn(2+).

It catalyses the reaction RNA(n) + a ribonucleoside 5'-triphosphate = RNA(n+1) + diphosphate. In terms of biological role, DNA-dependent RNA polymerase catalyzes the transcription of DNA into RNA using the four ribonucleoside triphosphates as substrates. This chain is DNA-directed RNA polymerase subunit beta', found in Solibacter usitatus (strain Ellin6076).